Consider the following 428-residue polypeptide: Tyrosine--tRNA ligase (428 aa).

Residue tyrosine 41 participates in L-tyrosine binding. Residues 46 to 55 carry the 'HIGH' region motif; that stretch reads PTADSLHLGH. 2 residues coordinate L-tyrosine: tyrosine 179 and glutamine 183. Positions 239 to 243 match the 'KMSKS' region motif; that stretch reads KFGKT. Lysine 242 contacts ATP. The S4 RNA-binding domain maps to 361–418; sequence ADLLQALVDSELQPSRGQARKTVASNAVTINGEKQADPEYVFSDSDRLFGRYTLLRRG.

It belongs to the class-I aminoacyl-tRNA synthetase family. TyrS type 1 subfamily. Homodimer.

The protein localises to the cytoplasm. The catalysed reaction is tRNA(Tyr) + L-tyrosine + ATP = L-tyrosyl-tRNA(Tyr) + AMP + diphosphate + H(+). In terms of biological role, catalyzes the attachment of tyrosine to tRNA(Tyr) in a two-step reaction: tyrosine is first activated by ATP to form Tyr-AMP and then transferred to the acceptor end of tRNA(Tyr). The sequence is that of Tyrosine--tRNA ligase from Klebsiella pneumoniae subsp. pneumoniae (strain ATCC 700721 / MGH 78578).